A 378-amino-acid chain; its full sequence is Glutamate 5-kinase (378 aa).

Lysine 15 lines the ATP pocket. 3 residues coordinate substrate: serine 56, aspartate 143, and asparagine 155. Serine 175–aspartate 176 contributes to the ATP binding site. In terms of domain architecture, PUA spans lysine 281–serine 358.

It belongs to the glutamate 5-kinase family.

Its subcellular location is the cytoplasm. The enzyme catalyses L-glutamate + ATP = L-glutamyl 5-phosphate + ADP. It participates in amino-acid biosynthesis; L-proline biosynthesis; L-glutamate 5-semialdehyde from L-glutamate: step 1/2. Its function is as follows. Catalyzes the transfer of a phosphate group to glutamate to form L-glutamate 5-phosphate. This is Glutamate 5-kinase from Bradyrhizobium sp. (strain BTAi1 / ATCC BAA-1182).